Reading from the N-terminus, the 112-residue chain is Large ribosomal subunit protein uL22 (112 aa).

It belongs to the universal ribosomal protein uL22 family. As to quaternary structure, part of the 50S ribosomal subunit.

Functionally, this protein binds specifically to 23S rRNA; its binding is stimulated by other ribosomal proteins, e.g. L4, L17, and L20. It is important during the early stages of 50S assembly. It makes multiple contacts with different domains of the 23S rRNA in the assembled 50S subunit and ribosome. In terms of biological role, the globular domain of the protein is located near the polypeptide exit tunnel on the outside of the subunit, while an extended beta-hairpin is found that lines the wall of the exit tunnel in the center of the 70S ribosome. The sequence is that of Large ribosomal subunit protein uL22 from Anaplasma marginale (strain Florida).